A 1020-amino-acid chain; its full sequence is Protein translocase subunit SecA (1020 aa).

ATP contacts are provided by residues Gln-99, Gly-117 to Thr-121, and Asp-633. The disordered stretch occupies residues Asn-963–Val-992. Basic and acidic residues predominate over residues Glu-978 to Pro-987. Cys-1002, Cys-1004, Cys-1013, and Cys-1014 together coordinate Zn(2+).

Belongs to the SecA family. As to quaternary structure, monomer and homodimer. Part of the essential Sec protein translocation apparatus which comprises SecA, SecYEG and auxiliary proteins SecDF. Other proteins may also be involved. It depends on Zn(2+) as a cofactor.

The protein resides in the cell inner membrane. The protein localises to the cytoplasm. The enzyme catalyses ATP + H2O + cellular proteinSide 1 = ADP + phosphate + cellular proteinSide 2.. In terms of biological role, part of the Sec protein translocase complex. Interacts with the SecYEG preprotein conducting channel. Has a central role in coupling the hydrolysis of ATP to the transfer of proteins into and across the cell membrane, serving as an ATP-driven molecular motor driving the stepwise translocation of polypeptide chains across the membrane. This Protochlamydia amoebophila (strain UWE25) protein is Protein translocase subunit SecA.